The following is a 153-amino-acid chain: Protein Smg homolog (153 aa).

Belongs to the Smg family.

In Neisseria gonorrhoeae (strain ATCC 700825 / FA 1090), this protein is Protein Smg homolog.